The sequence spans 155 residues: Large ribosomal subunit protein uL30 (155 aa).

The protein belongs to the universal ribosomal protein uL30 family. In terms of assembly, part of the 50S ribosomal subunit.

This Pyrococcus furiosus (strain ATCC 43587 / DSM 3638 / JCM 8422 / Vc1) protein is Large ribosomal subunit protein uL30.